A 240-amino-acid polypeptide reads, in one-letter code: 1-(5-phosphoribosyl)-5-[(5-phosphoribosylamino)methylideneamino] imidazole-4-carboxamide isomerase (240 aa).

Asp10 acts as the Proton acceptor in catalysis. Catalysis depends on Asp132, which acts as the Proton donor.

The protein belongs to the HisA/HisF family.

Its subcellular location is the cytoplasm. It catalyses the reaction 1-(5-phospho-beta-D-ribosyl)-5-[(5-phospho-beta-D-ribosylamino)methylideneamino]imidazole-4-carboxamide = 5-[(5-phospho-1-deoxy-D-ribulos-1-ylimino)methylamino]-1-(5-phospho-beta-D-ribosyl)imidazole-4-carboxamide. It participates in amino-acid biosynthesis; L-histidine biosynthesis; L-histidine from 5-phospho-alpha-D-ribose 1-diphosphate: step 4/9. The sequence is that of 1-(5-phosphoribosyl)-5-[(5-phosphoribosylamino)methylideneamino] imidazole-4-carboxamide isomerase from Methanocella arvoryzae (strain DSM 22066 / NBRC 105507 / MRE50).